The chain runs to 87 residues: Protein U62 (87 aa).

It belongs to the herpesviridae UL91 family.

The chain is Protein U62 (U62) from Human herpesvirus 6B (strain Z29) (HHV-6 variant B).